The following is a 494-amino-acid chain: PIGF/3-ketodihydrosphingosine reductase fusion protein (494 aa).

NADPH-binding residues include Gly20, Ser22, and Gly24. A GXSXG motif is present at residues 20–24 (GGSQG). Leu25 serves as a coordination point for NADP(+). Arg45 and Lys49 together coordinate NADPH. Val54 contributes to the NADP(+) binding site. Residues Asp74 and Leu75 each coordinate NADPH. A helical transmembrane segment spans residues 148–168 (ILLVGSLLSSLPIIGYSAYSP). Residues Tyr166, Lys170, and Ile199 each contribute to the NADP(+) site. Tyr166 acts as the Proton acceptor in catalysis. Lys170 acts as the Lowers pKa of active site Tyr in catalysis. Helical transmembrane passes span 264 to 284 (HDNPILEYLFALVSLLAWPFY), 312 to 332 (IFTLLLTFTQLTIFYLSLNCL), 370 to 390 (LAGAASMLIGSLLISFILVAF), 402 to 422 (YFCALTLSVFTVYPLASTLAF), 444 to 464 (LRSWGPIIGAWFGAFPIPLDW), and 473 to 493 (ITIVIGAFLGYAFAAIVGEIL).

It in the N-terminal section; belongs to the short-chain dehydrogenases/reductases (SDR) family. This sequence in the C-terminal section; belongs to the PIGF family.

Its subcellular location is the endoplasmic reticulum membrane. It catalyses the reaction sphinganine + NADP(+) = 3-oxosphinganine + NADPH + H(+). Its pathway is glycolipid biosynthesis; glycosylphosphatidylinositol-anchor biosynthesis. It participates in lipid metabolism; sphingolipid metabolism. Acts in the GPI biosynthetic pathway between GlcNAc-PI synthesis and GPI transfer to protein. Required for the formation of complete GPI precursors CP1 and CP2. Its function is as follows. Catalyzes the reduction of 3'-oxosphinganine (3-ketodihydrosphingosine/KDS) to sphinganine (dihydrosphingosine/DHS), the second step of de novo sphingolipid biosynthesis. In Schizosaccharomyces pombe (strain 972 / ATCC 24843) (Fission yeast), this protein is PIGF/3-ketodihydrosphingosine reductase fusion protein.